The following is a 418-amino-acid chain: UPF0261 protein BMEII0128 (418 aa).

This sequence belongs to the UPF0261 family.

This Brucella melitensis biotype 1 (strain ATCC 23456 / CCUG 17765 / NCTC 10094 / 16M) protein is UPF0261 protein BMEII0128.